Reading from the N-terminus, the 449-residue chain is Tubulin alpha chain (449 aa).

Q11 is a binding site for GTP. K40 bears the N6-acetyllysine mark. Residues E71, S140, G144, T145, T179, N206, and N228 each contribute to the GTP site. E71 is a Mg(2+) binding site. E254 is an active-site residue.

Belongs to the tubulin family. As to quaternary structure, dimer of alpha and beta chains. A typical microtubule is a hollow water-filled tube with an outer diameter of 25 nm and an inner diameter of 15 nM. Alpha-beta heterodimers associate head-to-tail to form protofilaments running lengthwise along the microtubule wall with the beta-tubulin subunit facing the microtubule plus end conferring a structural polarity. Microtubules usually have 13 protofilaments but different protofilament numbers can be found in some organisms and specialized cells. It depends on Mg(2+) as a cofactor. Post-translationally, undergoes a tyrosination/detyrosination cycle, the cyclic removal and re-addition of a C-terminal tyrosine residue by the enzymes tubulin tyrosine carboxypeptidase (TTCP) and tubulin tyrosine ligase (TTL), respectively. In terms of processing, acetylation of alpha chains at Lys-40 stabilizes microtubules and affects affinity and processivity of microtubule motors. This modification has a role in multiple cellular functions, ranging from cell motility, cell cycle progression or cell differentiation to intracellular trafficking and signaling.

Its subcellular location is the cytoplasm. It is found in the cytoskeleton. It catalyses the reaction GTP + H2O = GDP + phosphate + H(+). Its function is as follows. Tubulin is the major constituent of microtubules, a cylinder consisting of laterally associated linear protofilaments composed of alpha- and beta-tubulin heterodimers. Microtubules grow by the addition of GTP-tubulin dimers to the microtubule end, where a stabilizing cap forms. Below the cap, tubulin dimers are in GDP-bound state, owing to GTPase activity of alpha-tubulin. This is Tubulin alpha chain from Tetrahymena pyriformis.